The primary structure comprises 651 residues: F-box only protein 43 (651 aa).

Disordered regions lie at residues M14–F42 and L140–L171. Over residues T27–S36 the composition is skewed to polar residues. Position 33 is a phosphoserine; by PLK1 (S33). A Phosphothreonine; by CaMK2 modification is found at T195. An F-box domain is found at S424–K499. The segment at A579 to G627 adopts a ZBR-type zinc-finger fold. Zn(2+) contacts are provided by C583, C586, C601, C606, C611, C614, H619, and C624.

As to quaternary structure, part of a SCF (SKP1-cullin-F-box) protein ligase complex. Interaction with SKP1 does not occur. Phosphorylated on Thr-195 by CaMK2 in response to calcium during egg activation, which promotes subsequent phosphorylation by PLK1, ubiquitination and protesomal degradation. In terms of processing, ubiquitinated by FBXW1 during egg activation, which promotes proteasomal degradation.

Its pathway is protein modification; protein ubiquitination. Its function is as follows. Required to prevent anaphase onset in cytostatic factor-arrested oocytes. Inhibits the anaphase-promoting complex/cyclosome (APC/C) ubiquitin ligase and prevents cyclin degradation. Probably recognizes and binds to some phosphorylated proteins and promotes their ubiquitination and degradation. This is F-box only protein 43 (fbxo43) from Xenopus laevis (African clawed frog).